The sequence spans 244 residues: Uridylate kinase (244 aa).

Residue 16–19 (KLSG) coordinates ATP. Gly58 contacts UMP. The ATP site is built by Gly59 and Arg63. Residues Asp78 and 139–146 (VGAPYFTT) contribute to the UMP site. Positions 166, 172, and 175 each coordinate ATP.

The protein belongs to the UMP kinase family. Homohexamer.

The protein resides in the cytoplasm. It carries out the reaction UMP + ATP = UDP + ADP. The protein operates within pyrimidine metabolism; CTP biosynthesis via de novo pathway; UDP from UMP (UMPK route): step 1/1. Its activity is regulated as follows. Inhibited by UTP. Catalyzes the reversible phosphorylation of UMP to UDP. The protein is Uridylate kinase of Novosphingobium aromaticivorans (strain ATCC 700278 / DSM 12444 / CCUG 56034 / CIP 105152 / NBRC 16084 / F199).